Reading from the N-terminus, the 63-residue chain is Large ribosomal subunit protein bL28A (63 aa).

Belongs to the bacterial ribosomal protein bL28 family.

This chain is Large ribosomal subunit protein bL28A, found in Nocardia farcinica (strain IFM 10152).